The sequence spans 760 residues: 5-methyltetrahydropteroyltriglutamate--homocysteine methyltransferase (760 aa).

Residues R24–K27 and K118 each bind 5-methyltetrahydropteroyltri-L-glutamate. L-homocysteine-binding positions include I437–S439 and E490. Residues I437–S439 and E490 each bind L-methionine. 5-methyltetrahydropteroyltri-L-glutamate-binding positions include R521–C522 and W567. L-homocysteine is bound at residue D605. D605 lines the L-methionine pocket. E611 serves as a coordination point for 5-methyltetrahydropteroyltri-L-glutamate. Residues H647, C649, and E671 each coordinate Zn(2+). The active-site Proton donor is the H700. Zn(2+) is bound at residue C732.

The protein belongs to the vitamin-B12 independent methionine synthase family. It depends on Zn(2+) as a cofactor.

It catalyses the reaction 5-methyltetrahydropteroyltri-L-glutamate + L-homocysteine = tetrahydropteroyltri-L-glutamate + L-methionine. It functions in the pathway amino-acid biosynthesis; L-methionine biosynthesis via de novo pathway; L-methionine from L-homocysteine (MetE route): step 1/1. In terms of biological role, catalyzes the transfer of a methyl group from 5-methyltetrahydrofolate to homocysteine resulting in methionine formation. This Mycobacterium leprae (strain TN) protein is 5-methyltetrahydropteroyltriglutamate--homocysteine methyltransferase.